The chain runs to 1236 residues: ABC transporter B family member 9 (1236 aa).

Residues 33–320 enclose the ABC transmembrane type-1 1 domain; sequence MTVGTIAAAG…TSPSLNAFAA (288 aa). 6 helical membrane passes run 38–58, 80–100, 158–178, 179–199, 257–277, and 288–308; these read IAAA…GQLI, FIYL…CWMV, QLLC…PLLA, GVLC…SLIM, ISGF…GLAV, and GYNG…GMSL. The 237-residue stretch at 355 to 591 folds into the ABC transporter 1 domain; sequence IELKDVYFRY…PEGAYSQLVR (237 aa). 390–397 contributes to the ATP binding site; sequence GQSGSGKS. An N-linked (GlcNAc...) asparagine glycan is attached at Asn542. A disordered region spans residues 593 to 616; it reads QEGSKEEATESERPETSLDVERSG. Basic and acidic residues predominate over residues 594 to 616; the sequence is EGSKEEATESERPETSLDVERSG. Asn631 and Asn653 each carry an N-linked (GlcNAc...) asparagine glycan. The next 6 helical transmembrane spans lie at 685 to 705, 725 to 745, 785 to 805, 806 to 826, 902 to 922, and 927 to 947; these read VLVL…IFGL, SHFW…MIPV, SLVG…TTGL, IIAF…SPFI, FSFF…AGLI, and ATFG…IGVS. The ABC transmembrane type-1 2 domain occupies 686–958; that stretch reads LVLGSIAAMV…TSAMAPDSNK (273 aa). The ABC transporter 2 domain maps to 993–1230; sequence IEFRHVSFRY…SGGAYASLVT (238 aa). Residue 1028–1035 participates in ATP binding; that stretch reads GESGSGKS. Residues Asn1082 and Asn1181 are each glycosylated (N-linked (GlcNAc...) asparagine).

The protein belongs to the ABC transporter superfamily. ABCB family. Multidrug resistance exporter (TC 3.A.1.201) subfamily.

The protein localises to the membrane. The protein is ABC transporter B family member 9 (ABCB9) of Arabidopsis thaliana (Mouse-ear cress).